We begin with the raw amino-acid sequence, 1282 residues long: Trafficking protein particle complex subunit 8 (1282 aa).

A disordered region spans residues 245-287; that stretch reads TDAIAPGPNGASNQQSPSSPTSSVATISSTMPAVGSVSPNSHP. The span at 255–273 shows a compositional bias: low complexity; that stretch reads ASNQQSPSSPTSSVATISS.

Functionally, plays a role in endoplasmic reticulum to Golgi apparatus trafficking at a very early stage. Involved in collagen secretion. This is Trafficking protein particle complex subunit 8 from Caenorhabditis elegans.